Reading from the N-terminus, the 274-residue chain is Penicillin-insensitive murein endopeptidase (274 aa).

A signal peptide spans 1-19 (MNKTAIALLALLASSVSLA). Disulfide bonds link C44–C265, C187–C235, and C216–C223. Zn(2+) contacts are provided by H110, H113, D120, D147, H150, and H211. The disordered stretch occupies residues 227-274 (PLPPPGDGCGAELQSWFEPPKPGTTKPEKKTPPPLPPSCQALLDEHVI).

Belongs to the peptidase M74 family. Dimer. Zn(2+) serves as cofactor.

It localises to the periplasm. Functionally, murein endopeptidase that cleaves the D-alanyl-meso-2,6-diamino-pimelyl amide bond that connects peptidoglycan strands. Likely plays a role in the removal of murein from the sacculus. This is Penicillin-insensitive murein endopeptidase from Shigella dysenteriae serotype 1 (strain Sd197).